We begin with the raw amino-acid sequence, 186 residues long: Adenine phosphoribosyltransferase (186 aa).

The protein belongs to the purine/pyrimidine phosphoribosyltransferase family. Homodimer.

It is found in the cytoplasm. The catalysed reaction is AMP + diphosphate = 5-phospho-alpha-D-ribose 1-diphosphate + adenine. It participates in purine metabolism; AMP biosynthesis via salvage pathway; AMP from adenine: step 1/1. Catalyzes a salvage reaction resulting in the formation of AMP, that is energically less costly than de novo synthesis. The protein is Adenine phosphoribosyltransferase of Xanthomonas axonopodis pv. citri (strain 306).